The chain runs to 328 residues: Biotin synthase (328 aa).

In terms of domain architecture, Radical SAM core spans 51 to 282; it reads FNGNHVDLCS…DKIIRYAGGR (232 aa). Positions 69, 73, and 76 each coordinate [4Fe-4S] cluster. [2Fe-2S] cluster contacts are provided by cysteine 112, cysteine 147, cysteine 207, and arginine 277.

The protein belongs to the radical SAM superfamily. Biotin synthase family. In terms of assembly, homodimer. Requires [4Fe-4S] cluster as cofactor. The cofactor is [2Fe-2S] cluster.

It carries out the reaction (4R,5S)-dethiobiotin + (sulfur carrier)-SH + 2 reduced [2Fe-2S]-[ferredoxin] + 2 S-adenosyl-L-methionine = (sulfur carrier)-H + biotin + 2 5'-deoxyadenosine + 2 L-methionine + 2 oxidized [2Fe-2S]-[ferredoxin]. Its pathway is cofactor biosynthesis; biotin biosynthesis; biotin from 7,8-diaminononanoate: step 2/2. Catalyzes the conversion of dethiobiotin (DTB) to biotin by the insertion of a sulfur atom into dethiobiotin via a radical-based mechanism. This is Biotin synthase from Clostridium acetobutylicum (strain ATCC 824 / DSM 792 / JCM 1419 / IAM 19013 / LMG 5710 / NBRC 13948 / NRRL B-527 / VKM B-1787 / 2291 / W).